Reading from the N-terminus, the 328-residue chain is L-lactate dehydrogenase (328 aa).

NAD(+) is bound by residues Val-18, Glu-39, Lys-46, Tyr-71, and 85 to 86; that span reads GA. 2 residues coordinate substrate: Gln-88 and Arg-94. NAD(+) contacts are provided by residues Ser-107, 124-126, and Ser-149; that span reads AAN. Residue 126-129 participates in substrate binding; the sequence is NPVD. Substrate is bound at residue 154–157; that stretch reads DSAR. Beta-D-fructose 1,6-bisphosphate is bound by residues Arg-159 and His-174. The active-site Proton acceptor is the His-181. At Tyr-226 the chain carries Phosphotyrosine. Substrate is bound at residue Thr-235.

It belongs to the LDH/MDH superfamily. LDH family. As to quaternary structure, homotetramer.

The protein resides in the cytoplasm. It catalyses the reaction (S)-lactate + NAD(+) = pyruvate + NADH + H(+). It participates in fermentation; pyruvate fermentation to lactate; (S)-lactate from pyruvate: step 1/1. Its activity is regulated as follows. Allosterically activated by fructose 1,6-bisphosphate (FBP). Functionally, catalyzes the conversion of lactate to pyruvate. The polypeptide is L-lactate dehydrogenase (Streptococcus thermophilus (strain CNRZ 1066)).